The chain runs to 300 residues: GTPase Era (300 aa).

The region spanning 8-176 (RCGYVAIVGR…ERLVAGRLPQ (169 aa)) is the Era-type G domain. Positions 16–23 (GRPNVGKS) are G1. 16–23 (GRPNVGKS) serves as a coordination point for GTP. The G2 stretch occupies residues 42–46 (QTTRH). The interval 63-66 (DTPG) is G3. Residues 63–67 (DTPGL) and 125–128 (NKAD) each bind GTP. Positions 125 to 128 (NKAD) are G4. A G5 region spans residues 155–157 (ISA). The 85-residue stretch at 199–283 (VREKIMRQLG…MLNLWVKVKG (85 aa)) folds into the KH type-2 domain.

The protein belongs to the TRAFAC class TrmE-Era-EngA-EngB-Septin-like GTPase superfamily. Era GTPase family. As to quaternary structure, monomer.

Its subcellular location is the cytoplasm. The protein localises to the cell inner membrane. In terms of biological role, an essential GTPase that binds both GDP and GTP, with rapid nucleotide exchange. Plays a role in 16S rRNA processing and 30S ribosomal subunit biogenesis and possibly also in cell cycle regulation and energy metabolism. The sequence is that of GTPase Era from Azotobacter vinelandii (strain DJ / ATCC BAA-1303).